We begin with the raw amino-acid sequence, 406 residues long: Cysteine desulfurase (406 aa).

Lysine 226 bears the N6-(pyridoxal phosphate)lysine mark. Cysteine 364 (cysteine persulfide intermediate) is an active-site residue.

This sequence belongs to the class-V pyridoxal-phosphate-dependent aminotransferase family. Csd subfamily. Homodimer. Interacts with SufE and the SufBCD complex composed of SufB, SufC and SufD. The interaction with SufE is required to mediate the direct transfer of the sulfur atom from the S-sulfanylcysteine. The cofactor is pyridoxal 5'-phosphate.

Its subcellular location is the cytoplasm. The enzyme catalyses (sulfur carrier)-H + L-cysteine = (sulfur carrier)-SH + L-alanine. It carries out the reaction L-selenocysteine + AH2 = hydrogenselenide + L-alanine + A + H(+). It participates in cofactor biosynthesis; iron-sulfur cluster biosynthesis. Its function is as follows. Cysteine desulfurases mobilize the sulfur from L-cysteine to yield L-alanine, an essential step in sulfur metabolism for biosynthesis of a variety of sulfur-containing biomolecules. Component of the suf operon, which is activated and required under specific conditions such as oxidative stress and iron limitation. Acts as a potent selenocysteine lyase in vitro, that mobilizes selenium from L-selenocysteine. Selenocysteine lyase activity is however unsure in vivo. This Salmonella choleraesuis (strain SC-B67) protein is Cysteine desulfurase.